The sequence spans 708 residues: Soluble guanylate cyclase gcy-37 (708 aa).

H105 serves as a coordination point for heme. Residues 368 to 409 adopt a coiled-coil conformation; sequence LNQSRICQMELNKKLEETMKKMKKMTEELEVKKSQTDRLLFE. The Guanylate cyclase domain maps to 434 to 562; sequence SVIFTDIPDF…NTVNVTKSIC (129 aa). Residues D439 and D483 each contribute to the Mg(2+) site.

It belongs to the adenylyl cyclase class-4/guanylyl cyclase family. In terms of assembly, heterodimer; with other soluble guanylate cyclases. Heme serves as cofactor. Expressed in a small number of neurons, corresponding to URX, AQR and PQR neurons.

The protein resides in the cytoplasm. The catalysed reaction is GTP = 3',5'-cyclic GMP + diphosphate. Its activity is regulated as follows. May be regulated by molecular oxygen. Probably not activated by nitric oxide (NO). Its function is as follows. Synthesizes cyclic GMP (cGMP) from GTP. May play a role in sensory neurons. The sequence is that of Soluble guanylate cyclase gcy-37 (gcy-37) from Caenorhabditis elegans.